The chain runs to 281 residues: Oxidase pynE (281 aa).

It belongs to the avfA family.

Its pathway is secondary metabolite biosynthesis. In terms of biological role, oxidase; part of the gene cluster that mediates the biosynthesis of pyranonigrins, a family of antioxidative compounds. The first step of pyranonigrins biosynthesis is performed by the hybrid PKS-NRPS synthetase that condenses 6 malonyl-CoA units to an acetyl starter unit, to form a 1,3,5-trioxotetradecane-6,8-dienyl-ACP. The enoyl reductase (ER) domain of pynA is likely to be functional during the first two rounds of polyketide chain extension, to generate the saturated C-C bonds of the alkyl side chain. PynA subsequently forms the amide bond between the acyl chain and L-serine. Although pynA has a terminal reductase domain, it appears to require the thioesterase pynI for the release of the straight-chain intermediate from pynA via the formation of a tetramic acid pyranonigrin J. The methyltransferase pynC then coverts pyranonigrin J to pyranonigrin I via N-methylation. The FAD-dependent monooxygenase pynG catalyzes an epoxidation-mediated cyclization to form the dihydro-gamma-pyrone moiety, followed by pynD-catalyzed oxidation of the alcohol to the ketone and enolization to yield the characteristic tetramic acid-fused gamma-pyrone core of pyranonigrin H. Pyranonigrin H is substrate of pynH for dehydration-mediated exo-methylene formation from the serine side chain to produce pyranonigrin E, before the oxidase pynE reduces the exo-methylene of pyranonigrin E into a pendant methyl to form pyranonigrin G. The FAD-linked oxidoreductase pynB performs the reverse reaction and converts pyranonigrin G back to pyranonigrin E. This is Oxidase pynE from Aspergillus niger (strain ATCC MYA-4892 / CBS 513.88 / FGSC A1513).